A 166-amino-acid polypeptide reads, in one-letter code: Ribosome-binding factor A (166 aa).

Residues 119 to 166 (VQAQAKSGVYAGDEDPYVKPRVIGEDEDEDDEDGDDIDRSAPGYEPAH) are disordered. Acidic residues predominate over residues 143 to 154 (EDEDEDDEDGDD).

Belongs to the RbfA family. Monomer. Binds 30S ribosomal subunits, but not 50S ribosomal subunits or 70S ribosomes.

Its subcellular location is the cytoplasm. Its function is as follows. One of several proteins that assist in the late maturation steps of the functional core of the 30S ribosomal subunit. Associates with free 30S ribosomal subunits (but not with 30S subunits that are part of 70S ribosomes or polysomes). Required for efficient processing of 16S rRNA. May interact with the 5'-terminal helix region of 16S rRNA. In Clavibacter michiganensis subsp. michiganensis (strain NCPPB 382), this protein is Ribosome-binding factor A.